Here is a 666-residue protein sequence, read N- to C-terminus: NADH-ubiquinone oxidoreductase chain 5 (666 aa).

Transmembrane regions (helical) follow at residues 3 to 23 (LLIL…GRWL), 31 to 51 (FSTL…FEIG), 59 to 78 (IFLV…GFLF), 82 to 101 (TVTM…IYSI), 119 to 139 (IFTF…MFLG), 168 to 190 (LIVN…WVFN), 211 to 231 (FLGF…IGAI), 251 to 271 (TPVS…FLMI), 283 to 303 (ILFI…VTGV), 311 to 333 (VIAY…SCYD), 337 to 357 (FHLA…GSVI), 375 to 395 (FMPL…GFPF), 421 to 441 (YISF…FYSF), 467 to 487 (LLMI…GYLI), 524 to 544 (WLPF…QIFL), 572 to 594 (VLYN…FKIL), and 629 to 649 (YLFF…YSYI).

Belongs to the complex I subunit 5 family.

It is found in the mitochondrion inner membrane. It catalyses the reaction a ubiquinone + NADH + 5 H(+)(in) = a ubiquinol + NAD(+) + 4 H(+)(out). Its function is as follows. Core subunit of the mitochondrial membrane respiratory chain NADH dehydrogenase (Complex I) that is believed to belong to the minimal assembly required for catalysis. Complex I functions in the transfer of electrons from NADH to the respiratory chain. The immediate electron acceptor for the enzyme is believed to be ubiquinone. In Chondrus crispus (Carrageen Irish moss), this protein is NADH-ubiquinone oxidoreductase chain 5 (ND5).